A 356-amino-acid chain; its full sequence is Vacuolar protein sorting-associated protein 26 (356 aa).

Residues 301–356 are disordered; that stretch reads MRRPGTEDDEEEKQTTSIPGTQKFTAPAPVEHPKPESPRSDPKSGSTSPDDNSDSS. A compositionally biased stretch (polar residues) spans 315–324; sequence TTSIPGTQKF. Residues 331 to 342 are compositionally biased toward basic and acidic residues; sequence EHPKPESPRSDP.

This sequence belongs to the VPS26 family.

Functionally, may play a role in vesicular protein sorting, similar to the yeast retromer proteins. The chain is Vacuolar protein sorting-associated protein 26 (vps-26) from Caenorhabditis elegans.